The chain runs to 293 residues: Ribosomal protein L11 methyltransferase (293 aa).

S-adenosyl-L-methionine-binding residues include threonine 145, glycine 166, aspartate 188, and asparagine 230.

Belongs to the methyltransferase superfamily. PrmA family.

It localises to the cytoplasm. It carries out the reaction L-lysyl-[protein] + 3 S-adenosyl-L-methionine = N(6),N(6),N(6)-trimethyl-L-lysyl-[protein] + 3 S-adenosyl-L-homocysteine + 3 H(+). Its function is as follows. Methylates ribosomal protein L11. The sequence is that of Ribosomal protein L11 methyltransferase from Mannheimia succiniciproducens (strain KCTC 0769BP / MBEL55E).